The following is a 404-amino-acid chain: MTEVTELMRPEGEALNTKEVLLNLGPQHPSTHGVLRLVLQLDGEYVERVDPHIGYLHRGTEKLAESFTYTQIFPLTDRLDYLCPPSNNLAFALAVEKLLGIEAPIRAQYIRVMMAELARISGHLLITGALPMDLGAMTALLYAMREREMIMDLLEMITGARMHTSYCRVGGVREDLPDGFLPKIREFCEIFPNRIRDYERLIENNRVFLSRTQGVGVISATDAIDLGLSGPNLRASGVDWDIRRDEPYEIYDRLDFDVITREEGDCYSRWLCRVDEMRESIRLIEQCMEQMPEGPFQVDIPTIAFPVDKERVHCSMEALIQHFDLSAYGFDVPAGEVYSVIEAPKGELGFYIISDGSPKPFRMKVRAPSFVNLQALFGVTNARYLADMIAVLGSLDPVMAEVDK.

The protein belongs to the complex I 49 kDa subunit family. As to quaternary structure, NDH-1 is composed of 14 different subunits. Subunits NuoB, C, D, E, F, and G constitute the peripheral sector of the complex.

It localises to the cell inner membrane. The catalysed reaction is a quinone + NADH + 5 H(+)(in) = a quinol + NAD(+) + 4 H(+)(out). Its function is as follows. NDH-1 shuttles electrons from NADH, via FMN and iron-sulfur (Fe-S) centers, to quinones in the respiratory chain. The immediate electron acceptor for the enzyme in this species is believed to be ubiquinone. Couples the redox reaction to proton translocation (for every two electrons transferred, four hydrogen ions are translocated across the cytoplasmic membrane), and thus conserves the redox energy in a proton gradient. The polypeptide is NADH-quinone oxidoreductase subunit D 2 (Rhizobium meliloti (strain 1021) (Ensifer meliloti)).